A 357-amino-acid chain; its full sequence is DNA replication and repair protein RecF (357 aa).

30–37 (GANGSGKT) is a binding site for ATP.

Belongs to the RecF family.

It is found in the cytoplasm. Functionally, the RecF protein is involved in DNA metabolism; it is required for DNA replication and normal SOS inducibility. RecF binds preferentially to single-stranded, linear DNA. It also seems to bind ATP. The chain is DNA replication and repair protein RecF from Salmonella heidelberg (strain SL476).